The primary structure comprises 161 residues: Ferredoxin/F(420)H(2)-dependent CoB-CoM heterodisulfide reductase subunit C (161 aa).

4Fe-4S ferredoxin-type domains lie at 10-40 and 51-82; these read KAEGLDLLSCMHCGICTGSCPSGRHTGLNTR and AAVLSDYDLWLCTTCYTCQERCPRGIPITDAI. The [4Fe-4S] cluster site is built by Cys-19, Cys-22, Cys-25, Cys-29, Cys-62, Cys-65, Cys-68, and Cys-72.

The protein belongs to the HdrC family. The ferredoxin/F(420)H(2)-dependent CoB-CoM heterodisulfide reductase is composed of three subunits; HdrA2, HdrB2 and HdrC2. The cofactor is [4Fe-4S] cluster.

Its subcellular location is the cytoplasm. The enzyme catalyses coenzyme B + coenzyme M + 2 oxidized [2Fe-2S]-[ferredoxin] = coenzyme M-coenzyme B heterodisulfide + 2 reduced [2Fe-2S]-[ferredoxin] + 2 H(+). It carries out the reaction coenzyme B + 2 oxidized coenzyme F420-(gamma-L-Glu)(n) + coenzyme M + 2 reduced [2Fe-2S]-[ferredoxin] + 4 H(+) = coenzyme M-coenzyme B heterodisulfide + 2 reduced coenzyme F420-(gamma-L-Glu)(n) + 2 oxidized [2Fe-2S]-[ferredoxin]. It functions in the pathway cofactor metabolism; coenzyme M-coenzyme B heterodisulfide reduction; coenzyme B and coenzyme M from coenzyme M-coenzyme B heterodisulfide: step 1/1. Part of a complex that catalyzes the reversible reduction of CoM-S-S-CoB to the thiol-coenzymes H-S-CoM (coenzyme M) and H-S-CoB (coenzyme B). Catalyzes the transfer of electrons from ferredoxin to CoM-S-S-CoB during methanogenesis from acetate. Electrons transfer from ferredoxin to CoM-S-S-CoB via HdrA2, HdrC2 and HdrB2. In addition, the complex can use electron bifurcation to direct electron pairs from reduced coenzyme F420 towards the reduction of both ferredoxin and CoB-CoM heterodisulfide. This activity may take place during Fe(III)-dependent anaerobic methane oxidation. The sequence is that of Ferredoxin/F(420)H(2)-dependent CoB-CoM heterodisulfide reductase subunit C from Methanosarcina acetivorans (strain ATCC 35395 / DSM 2834 / JCM 12185 / C2A).